A 240-amino-acid chain; its full sequence is Ribosomal RNA small subunit methyltransferase I (240 aa).

It belongs to the methyltransferase superfamily. RsmI family.

The protein localises to the cytoplasm. It catalyses the reaction cytidine(1402) in 16S rRNA + S-adenosyl-L-methionine = 2'-O-methylcytidine(1402) in 16S rRNA + S-adenosyl-L-homocysteine + H(+). Functionally, catalyzes the 2'-O-methylation of the ribose of cytidine 1402 (C1402) in 16S rRNA. In Leptospira biflexa serovar Patoc (strain Patoc 1 / ATCC 23582 / Paris), this protein is Ribosomal RNA small subunit methyltransferase I.